A 188-amino-acid polypeptide reads, in one-letter code: Shikimate kinase (188 aa).

21 to 26 (GAGKTT) serves as a coordination point for ATP. A Mg(2+)-binding site is contributed by Thr25. Asp43, Arg67, and Gly90 together coordinate substrate. Residue Arg130 participates in ATP binding. Residue Arg148 participates in substrate binding.

It belongs to the shikimate kinase family. In terms of assembly, monomer. Mg(2+) is required as a cofactor.

Its subcellular location is the cytoplasm. The enzyme catalyses shikimate + ATP = 3-phosphoshikimate + ADP + H(+). It participates in metabolic intermediate biosynthesis; chorismate biosynthesis; chorismate from D-erythrose 4-phosphate and phosphoenolpyruvate: step 5/7. Functionally, catalyzes the specific phosphorylation of the 3-hydroxyl group of shikimic acid using ATP as a cosubstrate. This chain is Shikimate kinase, found in Geobacillus thermodenitrificans (strain NG80-2).